A 232-amino-acid chain; its full sequence is Ribonuclease P protein component 3 (232 aa).

The protein belongs to the eukaryotic/archaeal RNase P protein component 3 family. In terms of assembly, consists of a catalytic RNA component and at least 4-5 protein subunits.

The protein resides in the cytoplasm. The catalysed reaction is Endonucleolytic cleavage of RNA, removing 5'-extranucleotides from tRNA precursor.. Functionally, part of ribonuclease P, a protein complex that generates mature tRNA molecules by cleaving their 5'-ends. In Methanococcus maripaludis (strain C6 / ATCC BAA-1332), this protein is Ribonuclease P protein component 3.